The chain runs to 156 residues: ATP synthase subunit b (156 aa).

The helical transmembrane segment at 12–32 threads the bilayer; the sequence is VAFFIFVLFCMKFVWPPVIAA.

The protein belongs to the ATPase B chain family. In terms of assembly, F-type ATPases have 2 components, F(1) - the catalytic core - and F(0) - the membrane proton channel. F(1) has five subunits: alpha(3), beta(3), gamma(1), delta(1), epsilon(1). F(0) has three main subunits: a(1), b(2) and c(10-14). The alpha and beta chains form an alternating ring which encloses part of the gamma chain. F(1) is attached to F(0) by a central stalk formed by the gamma and epsilon chains, while a peripheral stalk is formed by the delta and b chains.

The protein localises to the cell inner membrane. F(1)F(0) ATP synthase produces ATP from ADP in the presence of a proton or sodium gradient. F-type ATPases consist of two structural domains, F(1) containing the extramembraneous catalytic core and F(0) containing the membrane proton channel, linked together by a central stalk and a peripheral stalk. During catalysis, ATP synthesis in the catalytic domain of F(1) is coupled via a rotary mechanism of the central stalk subunits to proton translocation. In terms of biological role, component of the F(0) channel, it forms part of the peripheral stalk, linking F(1) to F(0). The chain is ATP synthase subunit b from Pseudomonas syringae pv. syringae (strain B728a).